We begin with the raw amino-acid sequence, 213 residues long: Ribonuclease HII (213 aa).

The RNase H type-2 domain maps to 18–213; the sequence is GLYAGVDEVG…RPVKERLAKN (196 aa). A divalent metal cation-binding residues include D24, E25, and D116.

The protein belongs to the RNase HII family. Mn(2+) serves as cofactor. Mg(2+) is required as a cofactor.

It localises to the cytoplasm. The enzyme catalyses Endonucleolytic cleavage to 5'-phosphomonoester.. Its function is as follows. Endonuclease that specifically degrades the RNA of RNA-DNA hybrids. This chain is Ribonuclease HII, found in Shewanella sediminis (strain HAW-EB3).